We begin with the raw amino-acid sequence, 124 residues long: Profilin-2 (124 aa).

Belongs to the profilin family. Occurs in many kinds of cells as a complex with monomeric actin in a 1:1 ratio. Interacts with forH.

The protein resides in the cytoplasm. The protein localises to the cytoskeleton. Binds to actin and affects the structure of the cytoskeleton. At high concentrations, profilin prevents the polymerization of actin, whereas it enhances it at low concentrations. By binding to PIP2, it inhibits the formation of IP3 and DG. The protein is Profilin-2 (proB) of Dictyostelium discoideum (Social amoeba).